Here is a 183-residue protein sequence, read N- to C-terminus: Acireductone dioxygenase (183 aa).

Fe(2+) contacts are provided by His95, His97, Glu101, and His139. His95, His97, Glu101, and His139 together coordinate Ni(2+).

Belongs to the acireductone dioxygenase (ARD) family. Monomer. It depends on Fe(2+) as a cofactor. Requires Ni(2+) as cofactor.

It catalyses the reaction 1,2-dihydroxy-5-(methylsulfanyl)pent-1-en-3-one + O2 = 3-(methylsulfanyl)propanoate + CO + formate + 2 H(+). It carries out the reaction 1,2-dihydroxy-5-(methylsulfanyl)pent-1-en-3-one + O2 = 4-methylsulfanyl-2-oxobutanoate + formate + 2 H(+). It participates in amino-acid biosynthesis; L-methionine biosynthesis via salvage pathway; L-methionine from S-methyl-5-thio-alpha-D-ribose 1-phosphate: step 5/6. Its function is as follows. Catalyzes 2 different reactions between oxygen and the acireductone 1,2-dihydroxy-3-keto-5-methylthiopentene (DHK-MTPene) depending upon the metal bound in the active site. Fe-containing acireductone dioxygenase (Fe-ARD) produces formate and 2-keto-4-methylthiobutyrate (KMTB), the alpha-ketoacid precursor of methionine in the methionine recycle pathway. Ni-containing acireductone dioxygenase (Ni-ARD) produces methylthiopropionate, carbon monoxide and formate, and does not lie on the methionine recycle pathway. The sequence is that of Acireductone dioxygenase from Aquifex aeolicus (strain VF5).